A 155-amino-acid chain; its full sequence is Endoribonuclease YbeY (155 aa).

Zn(2+)-binding residues include His-114, His-118, and His-124.

The protein belongs to the endoribonuclease YbeY family. It depends on Zn(2+) as a cofactor.

It localises to the cytoplasm. Its function is as follows. Single strand-specific metallo-endoribonuclease involved in late-stage 70S ribosome quality control and in maturation of the 3' terminus of the 16S rRNA. This is Endoribonuclease YbeY from Escherichia coli O6:K15:H31 (strain 536 / UPEC).